Reading from the N-terminus, the 1553-residue chain is ABC-type transporter cctS (1553 aa).

Helical transmembrane passes span 27-47, 90-110, 114-134, and 151-171; these read LIPL…YFHA, LEVA…IFSG, DLTS…ILFV, and SVLY…AILG. Residue Asn-176 is glycosylated (N-linked (GlcNAc...) asparagine). The next 5 helical transmembrane spans lie at 177–197, 286–306, 324–344, 413–433, and 438–458; these read FTIA…FHWT, LLWQ…PPVL, TAWL…VAGC, GYLY…TYLL, and GISG…NILI. Residues 293–582 form the ABC transmembrane type-1 1 domain; sequence ATLNSFAVFV…IADAITFLLR (290 aa). Asn-524 is a glycosylation site (N-linked (GlcNAc...) asparagine). Helical transmembrane passes span 527–547 and 550–570; these read TFFS…TVVW and SMGT…RIPF. A glycan (N-linked (GlcNAc...) asparagine) is linked at Asn-617. In terms of domain architecture, ABC transporter 1 spans 635–874; that stretch reads NKRSDIQLTE…GRIDADIMQN (240 aa). 670 to 677 is a binding site for ATP; the sequence is GPSGSGKS. The N-linked (GlcNAc...) asparagine glycan is linked to Asn-725. Residues 948 to 970 traverse the membrane as a helical segment; the sequence is WYWVLVLFMFGIQQFISLATNIW. The ABC transmembrane type-1 2 domain maps to 951–1255; sequence VLVLFMFGIQ…FVQLYAIVQQ (305 aa). N-linked (GlcNAc...) asparagine glycosylation occurs at Asn-992. Residues 1017-1037 traverse the membrane as a helical segment; it reads IYVAICLAYAFFTFARDLIVF. N-linked (GlcNAc...) asparagine glycosylation occurs at Asn-1085. Transmembrane regions (helical) follow at residues 1086 to 1108, 1113 to 1135, 1204 to 1224, and 1229 to 1249; these read ISTF…VFIS, AFLI…FING, FLGS…LESV, and AALV…FVQL. The ABC transporter 2 domain occupies 1294-1533; the sequence is VRFDAYTTRY…DDDGIFRRLC (240 aa). 1328-1335 is an ATP binding site; the sequence is GRTGAGKS.

It belongs to the ABC transporter superfamily.

It is found in the membrane. It participates in mycotoxin biosynthesis. ABC-type transporter; part of the gene cluster that mediates the biosynthesis of the mycotoxin cyclochlorotine, a hepatotoxic and carcinogenic cyclic chlorinated pentapeptide. CctS is essential for the biosynthesis of cyclochlorotine, maybe as a chloride channel that supplies chloride for chlorination by cctP2. This is ABC-type transporter cctS from Talaromyces islandicus (Penicillium islandicum).